The chain runs to 352 residues: Photosystem II D2 protein (352 aa).

N-acetylthreonine is present on Thr2. At Thr2 the chain carries Phosphothreonine. Residues Thr40 to Thr60 traverse the membrane as a helical segment. Residue His117 participates in chlorophyll a binding. The helical transmembrane segment at Gly124 to Pro140 threads the bilayer. The pheophytin a site is built by Gln129 and Asn142. The chain crosses the membrane as a helical span at residues Val152–Ser165. Residue His197 coordinates chlorophyll a. Residues Ala207–Asp227 form a helical membrane-spanning segment. Positions 214 and 261 each coordinate a plastoquinone. His214 lines the Fe cation pocket. Fe cation is bound at residue His268. The helical transmembrane segment at Gly278–Arg294 threads the bilayer.

It belongs to the reaction center PufL/M/PsbA/D family. In terms of assembly, PSII is composed of 1 copy each of membrane proteins PsbA, PsbB, PsbC, PsbD, PsbE, PsbF, PsbH, PsbI, PsbJ, PsbK, PsbL, PsbM, PsbT, PsbX, PsbY, PsbZ, Psb30/Ycf12, at least 3 peripheral proteins of the oxygen-evolving complex and a large number of cofactors. It forms dimeric complexes. The D1/D2 heterodimer binds P680, chlorophylls that are the primary electron donor of PSII, and subsequent electron acceptors. It shares a non-heme iron and each subunit binds pheophytin, quinone, additional chlorophylls, carotenoids and lipids. There is also a Cl(-1) ion associated with D1 and D2, which is required for oxygen evolution. The PSII complex binds additional chlorophylls, carotenoids and specific lipids. serves as cofactor.

The protein localises to the plastid. Its subcellular location is the chloroplast thylakoid membrane. The enzyme catalyses 2 a plastoquinone + 4 hnu + 2 H2O = 2 a plastoquinol + O2. Photosystem II (PSII) is a light-driven water:plastoquinone oxidoreductase that uses light energy to abstract electrons from H(2)O, generating O(2) and a proton gradient subsequently used for ATP formation. It consists of a core antenna complex that captures photons, and an electron transfer chain that converts photonic excitation into a charge separation. The D1/D2 (PsbA/PsbD) reaction center heterodimer binds P680, the primary electron donor of PSII as well as several subsequent electron acceptors. D2 is needed for assembly of a stable PSII complex. The polypeptide is Photosystem II D2 protein (Chlorella vulgaris (Green alga)).